The chain runs to 354 residues: Probable calcium-binding protein CML50 (354 aa).

Composition is skewed to low complexity over residues 1-10 (MSGYPPTSQG) and 28-71 (YSSG…SSYG). The disordered stretch occupies residues 1 to 159 (MSGYPPTSQG…PASSGHGGGY (159 aa)). Residues 72–81 (APPPSAPYAP) are compositionally biased toward pro residues. A compositionally biased stretch (low complexity) spans 106–117 (GSSDYGSYGAGP). EF-hand domains lie at 183–218 (GTDP…YQQR) and 249–284 (YSLQ…LGFS). D196, D198, S200, E207, D262, D264, S266, R268, and E273 together coordinate Ca(2+).

Potential calcium sensor. This Arabidopsis thaliana (Mouse-ear cress) protein is Probable calcium-binding protein CML50 (CML50).